A 228-amino-acid polypeptide reads, in one-letter code: Ankyrin repeat domain-containing protein 46 (228 aa).

ANK repeat units follow at residues 11–40, 44–74, 77–103, and 107–138; these read QTNV…DPNI, RGRT…PLAT, QGNT…KIDI, and QGAT…EVKG. A helical transmembrane segment spans residues 195–215; it reads VLLLILVIALLSLGIAYYVSG.

Its subcellular location is the membrane. This chain is Ankyrin repeat domain-containing protein 46 (Ankrd46), found in Rattus norvegicus (Rat).